The following is a 513-amino-acid chain: Tigger transposable element-derived protein 4 (513 aa).

The region spanning 12 to 63 (PVTVKKKKSLSIEEKIDIINAVESGKKKAEIAAEYGIKKNSLSSIMKNKDKV) is the HTH psq-type domain. 2 consecutive DNA-binding regions (H-T-H motif) follow at residues 39–59 (KAEIAAEYGIKKNSLSSIMKN) and 108–139 (PMLRLKANDFAQKLGHNDFKCSNGWLDRFKSR). The region spanning 75-146 (KRKRLRTAFY…KSRYGLVFRA (72 aa)) is the HTH CENPB-type domain. The DDE-1 domain maps to 174–375 (YHPKNVFNVK…VTPETIVKSY (202 aa)). The span at 433-448 (TQKDDAEWAGESKQDE) shows a compositional bias: basic and acidic residues. A disordered region spans residues 433–473 (TQKDDAEWAGESKQDETGLYTSDEEEEDSGALEVDLPSPSK).

It belongs to the tigger transposable element derived protein family.

Its subcellular location is the nucleus. This Mus musculus (Mouse) protein is Tigger transposable element-derived protein 4 (Tigd4).